We begin with the raw amino-acid sequence, 525 residues long: Retinoblastoma-binding-like protein E (525 aa).

5 WD repeats span residues Pro-25–Thr-66, His-69–Ser-108, Ser-222–Gln-261, Asp-267–Glu-312, and Gly-313–Ser-352. 2 disordered regions span residues Asp-371–Tyr-398 and Glu-462–Lys-525. Low complexity predominate over residues Gln-383–Asn-392. The segment covering Glu-462–Ser-471 has biased composition (basic and acidic residues). Residues Ser-472–Ser-500 show a composition bias toward low complexity. Basic and acidic residues predominate over residues Gln-501–Lys-525.

It is found in the nucleus. In terms of biological role, involved in mono-, di- and trimethylation at 'Lys-4' of histone H3. Histone H3 'Lys-4' methylation represents a specific tag for epigenetic transcriptional activation. This Dictyostelium discoideum (Social amoeba) protein is Retinoblastoma-binding-like protein E.